Consider the following 566-residue polypeptide: Beta,beta-carotene 15,15'-dioxygenase (566 aa).

His-172, His-237, His-308, and His-514 together coordinate Fe cation. The segment at 530-566 (PAETQEVENSDHPTDPTAPELSHSENDFTAGHGGSSL) is disordered.

The protein belongs to the carotenoid oxygenase family. Fe(2+) serves as cofactor. Expressed in liver, kidney, small intestine and testis.

The protein localises to the cytoplasm. It is found in the cytosol. It carries out the reaction all-trans-beta-carotene + O2 = 2 all-trans-retinal. Its pathway is cofactor metabolism; retinol metabolism. Functionally, symmetrically cleaves beta-carotene into two molecules of retinal using a dioxygenase mechanism. The sequence is that of Beta,beta-carotene 15,15'-dioxygenase from Mus musculus (Mouse).